The primary structure comprises 763 residues: Amine oxidase [copper-containing] 3 (763 aa).

At 1–6 (MNQKTT) the chain is on the cytoplasmic side. The helical; Signal-anchor for type II membrane protein transmembrane segment at 7–27 (LVLLALAVITIFALVCVLIAG) threads the bilayer. The Extracellular portion of the chain corresponds to 28–763 (RGGDGGEASQ…AFSHGGFFTN (736 aa)). N-linked (GlcNAc...) asparagine glycosylation occurs at N137. C198 and C199 are oxidised to a cystine. N-linked (GlcNAc...) asparagine glycosylation is found at N232 and N294. The active-site Proton acceptor is the D386. Cysteines 404 and 430 form a disulfide. Y471 serves as the catalytic Schiff-base intermediate with substrate; via topaquinone. The residue at position 471 (Y471) is a 2',4',5'-topaquinone. Positions 520 and 522 each coordinate Cu(2+). Residues D529, L530, D531, and E572 each contribute to the Ca(2+) site. N-linked (GlcNAc...) asparagine glycosylation is present at N618. Positions 641, 663, and 665 each coordinate Ca(2+). An N-linked (GlcNAc...) asparagine glycan is attached at N666. Ca(2+)-binding residues include E667, D673, and L674. Position 684 (H684) interacts with Cu(2+). A disulfide bridge links C734 with C741.

The protein belongs to the copper/topaquinone oxidase family. In terms of assembly, homodimer; disulfide-linked. Probably forms heterodimers with AOC2. Cu(2+) is required as a cofactor. Requires Ca(2+) as cofactor. L-topaquinone serves as cofactor. Post-translationally, topaquinone (TPQ) is generated by copper-dependent autoxidation of a specific tyrosyl residue. In terms of processing, N- and O-glycosylated.

It localises to the cell membrane. The catalysed reaction is methylamine + O2 + H2O = formaldehyde + H2O2 + NH4(+). It catalyses the reaction benzylamine + O2 + H2O = benzaldehyde + H2O2 + NH4(+). The enzyme catalyses 2-phenylethylamine + O2 + H2O = 2-phenylacetaldehyde + H2O2 + NH4(+). Its function is as follows. Catalyzes the oxidative deamination of primary amines to the corresponding aldehydes with the concomitant production of hydrogen peroxide and ammonia. Has a preference for the primary monoamines methylamine and benzylamine. Could also act on 2-phenylethylamine but much less efficiently. At endothelial cells surface can also function as a cell adhesion protein that participates in lymphocyte extravasation and recirculation by mediating the binding of lymphocytes to peripheral lymph node vascular endothelial cells in an L-selectin-independent fashion. This chain is Amine oxidase [copper-containing] 3, found in Bos taurus (Bovine).